The following is a 264-amino-acid chain: uncharacterized protein (264 aa).

13–20 provides a ligand contact to NADP(+); it reads TGSTSGIG. Substrate is bound at residue serine 141. The active-site Proton acceptor is tyrosine 154.

Belongs to the short-chain dehydrogenases/reductases (SDR) family.

This is an uncharacterized protein from Bacillus subtilis (strain 168).